We begin with the raw amino-acid sequence, 289 residues long: RKMAAAAVNGAAGFSSSGPAATSGAVLQAATGMYEQLKGEWNRKSPNLSKCGEELGRLKLVLLELNFLPTTGTKLTKQQLILARDILEIGAQWSILRKDIPSFERYMAQLKCYYFDYKEQLPESAYMHQLLGLNLLFLLSQNRVAEFHTELERLPAKDIQTNVYIKHPVSLEQYLMEGSYNKVFLAKGNIPAESYAFFIDILLDTIRDEIAGCIEKAYEKILFTEATRILFFNTPKKMTDYAKKRGWVLGPNNYYSFASQQQKPEDTTIPSTELAKQVIEYARQLEMIV.

At Ser45 the chain carries Phosphoserine. Residues 101–270 (PSFERYMAQL…QQKPEDTTIP (170 aa)) form the PCI domain. A Glycyl lysine isopeptide (Lys-Gly) (interchain with G-Cter in SUMO2) cross-link involves residue Lys236.

The protein belongs to the proteasome subunit S14 family. Component of the 19S proteasome regulatory particle complex. The 26S proteasome consists of a 20S core particle (CP) and two 19S regulatory subunits (RP). The regulatory particle is made of a lid composed of 9 subunits including PSMD8, a base containing 6 ATPases and few additional components. Interacts with DDI2. Interacts with TASOR.

Functionally, component of the 26S proteasome, a multiprotein complex involved in the ATP-dependent degradation of ubiquitinated proteins. This complex plays a key role in the maintenance of protein homeostasis by removing misfolded or damaged proteins, which could impair cellular functions, and by removing proteins whose functions are no longer required. Therefore, the proteasome participates in numerous cellular processes, including cell cycle progression, apoptosis, or DNA damage repair. This is 26S proteasome non-ATPase regulatory subunit 8 (PSMD8) from Pongo abelii (Sumatran orangutan).